The chain runs to 590 residues: Transcription factor bHLH13 (590 aa).

Disordered stretches follow at residues 274–296 and 385–439; these read LQHH…HRQF and AASS…EAER. Low complexity predominate over residues 281 to 293; the sequence is QQQQQQPPQQQQH. Basic residues predominate over residues 416 to 425; that stretch reads RPRKRGRRPA. One can recognise a bHLH domain in the interval 429–478; sequence AEALNHVEAERQRREKLNQRFYALRSVVPNISKMDKASLLGDAVSYINEL.

In terms of assembly, homodimer.

The protein localises to the nucleus. The chain is Transcription factor bHLH13 (BHLH13) from Arabidopsis thaliana (Mouse-ear cress).